A 496-amino-acid chain; its full sequence is Glutamyl-tRNA(Gln) amidotransferase subunit A, mitochondrial (496 aa).

Active-site charge relay system residues include Lys-75 and Ser-162. Catalysis depends on Ser-186, which acts as the Acyl-ester intermediate.

It belongs to the amidase family. GatA subfamily. Subunit of the heterotrimeric GatCAB amidotransferase (AdT) complex, composed of A, B and C subunits.

The protein resides in the mitochondrion. It catalyses the reaction L-glutamyl-tRNA(Gln) + L-glutamine + ATP + H2O = L-glutaminyl-tRNA(Gln) + L-glutamate + ADP + phosphate + H(+). Allows the formation of correctly charged Gln-tRNA(Gln) through the transamidation of misacylated Glu-tRNA(Gln) in the mitochondria. The reaction takes place in the presence of glutamine and ATP through an activated gamma-phospho-Glu-tRNA(Gln). This Pediculus humanus subsp. corporis (Body louse) protein is Glutamyl-tRNA(Gln) amidotransferase subunit A, mitochondrial.